Reading from the N-terminus, the 404-residue chain is Acetylornithine aminotransferase (404 aa).

Residues 113-114 (GT) and phenylalanine 139 each bind pyridoxal 5'-phosphate. Arginine 142 is a N(2)-acetyl-L-ornithine binding site. 224 to 227 (DEVQ) serves as a coordination point for pyridoxal 5'-phosphate. Lysine 253 carries the N6-(pyridoxal phosphate)lysine modification. Residue serine 281 participates in N(2)-acetyl-L-ornithine binding. Threonine 282 lines the pyridoxal 5'-phosphate pocket.

The protein belongs to the class-III pyridoxal-phosphate-dependent aminotransferase family. ArgD subfamily. Homodimer. Pyridoxal 5'-phosphate is required as a cofactor.

It is found in the cytoplasm. The catalysed reaction is N(2)-acetyl-L-ornithine + 2-oxoglutarate = N-acetyl-L-glutamate 5-semialdehyde + L-glutamate. It functions in the pathway amino-acid biosynthesis; L-arginine biosynthesis; N(2)-acetyl-L-ornithine from L-glutamate: step 4/4. This chain is Acetylornithine aminotransferase, found in Mycobacterium leprae (strain TN).